The chain runs to 333 residues: MKIAIDGMGGDNAPSAVVEGVVSALKEYSEMTFYITGPEDKISLELSKYDYPKDKIIIIDAKEVISTNEHPVMALRRKKDSSIVKALNLVKDAHCDGIISAGSTGAFLAGCTLIVGRIKGVERPALGPIMPGRRGNFMIVDAGANVDSKPEYLVQFSKMGSIYYKNVFNVDIPSVGLLNIGAEEEKGNDLTKATYKLLKEENSINFVGNIEPRYIPTGDTNIIVSDGFAGNTALKMYEGSAKNILGMIKDEVLKADLKSKIGVLLLKPFLKRIMKKFDYKEYGGAPFLGVNGICIKAHGSSDGKAFKNAIRQTKIFYENNVLDEIKKEFEKKN.

It belongs to the PlsX family. In terms of assembly, homodimer. Probably interacts with PlsY.

The protein resides in the cytoplasm. The enzyme catalyses a fatty acyl-[ACP] + phosphate = an acyl phosphate + holo-[ACP]. The protein operates within lipid metabolism; phospholipid metabolism. Its function is as follows. Catalyzes the reversible formation of acyl-phosphate (acyl-PO(4)) from acyl-[acyl-carrier-protein] (acyl-ACP). This enzyme utilizes acyl-ACP as fatty acyl donor, but not acyl-CoA. The protein is Phosphate acyltransferase of Clostridium botulinum (strain Alaska E43 / Type E3).